Consider the following 432-residue polypeptide: Enolase (432 aa).

Glutamine 163 serves as a coordination point for (2R)-2-phosphoglycerate. The active-site Proton donor is the glutamate 205. Mg(2+) is bound by residues aspartate 242, glutamate 289, and aspartate 316. (2R)-2-phosphoglycerate is bound by residues lysine 341, arginine 370, serine 371, and lysine 392. Lysine 341 serves as the catalytic Proton acceptor.

It belongs to the enolase family. Mg(2+) is required as a cofactor. In terms of processing, probably phosphorylated.

Its subcellular location is the cytoplasm. The protein localises to the secreted. It is found in the cell surface. The catalysed reaction is (2R)-2-phosphoglycerate = phosphoenolpyruvate + H2O. It functions in the pathway carbohydrate degradation; glycolysis; pyruvate from D-glyceraldehyde 3-phosphate: step 4/5. Its function is as follows. Catalyzes the reversible conversion of 2-phosphoglycerate (2-PG) into phosphoenolpyruvate (PEP). It is essential for the degradation of carbohydrates via glycolysis. Functionally, 'Moonlights' as a plasminogen receptor. Binds plasminogen and human salivary mucin MG2 when expressed on the bacterial cell surface, potentially allowing the bacterium to acquire surface-associated proteolytic activity that may help the dissemination through oral tissues and entrance into the blood stream. The chain is Enolase from Streptococcus mutans serotype c (strain ATCC 700610 / UA159).